An 843-amino-acid chain; its full sequence is MSFNLEDTLESDWVAVRPNVFEEKERRKFVFIVAWNEVEGKFAITCHNRTAQRQRSADKAGGRSPARQQQRDSPAQSPARKAREEPEEGEEEECSWAGLFSFQDLRAVHQQLCSVSSELEPCLPTFPEEPSGVWSVLFGPSELSEAEVEDLGRQLRLYLGHALDTSGWKILSQVLFADSDDPEEYYQSLSELRHKGYEEGLQRARKRLQELLEKHKTTEVMVDLLDLYQLEDEAYSNVVEATTELYQYLLQPFRDMRELAMLRRQQIKISIENDYLGPRRIESLKKEDADWQKKAHMAVLSIQDLTVKYFEITARAQKAVFDRMRGDQKKFGKTAWAAAVERVEKLQYGVAKETLQLMRAKEICLEQKKHALKDQMQSLQGGTEAIAVLDELEADYYDHQLQLYEVQFEILKCEELLLTAQLESIKRQISEKTDEVVYYDTYESMEAMLATEDMAASIHIQRVELQKLQQKVRQLEAKRGRISAKKAYLRNKKEICIAKHSEKIQQRLHSDEGYRAAQLKQEKQEDEEERKSTWVSQERQKTLDRLRTFKQRHPGQVVLKSTRLRFSHERRRSTIRTTSSTDAPQSLSVSIQTQGLSDLGDTEVLQPIKTQKPETTTQLEDSSLPPNAITSELPLMTSLPTFTHEKLEPEISTLQPSSLPASPPPPPPPLPPPPPPPLPPSKQDTDTLEIRVIHVKKETEEKDGAKPVSGPLAQLFDSSQLLNARKTLKKTGALEGIQRRRVSSPMDEVLASLKRGSFHLKKVEQRALPPFPDEDESNNILAQIRKGVKLKKVQKEALRESFTLLPDTDPLTRSIHEALRRIKEASPESEDEEESLPCTDWEN.

Positions arginine 49 to glutamate 91 are disordered. The span at alanine 66–glutamine 76 shows a compositional bias: polar residues. Coiled coils occupy residues serine 190 to leucine 225, arginine 359 to alanine 385, and leucine 416 to alanine 487. 3 disordered regions span residues glutamine 518–glutamine 537, valine 558–glutamate 632, and serine 652–leucine 688. The span at threonine 562–threonine 574 shows a compositional bias: basic residues. 2 stretches are compositionally biased toward polar residues: residues aspartate 582–leucine 596 and proline 613–threonine 630. Residues alanine 661–proline 680 show a composition bias toward pro residues. The WH2 domain occupies glutamate 776–valine 793. Residues arginine 821 to asparagine 843 are disordered. A compositionally biased stretch (acidic residues) spans proline 827–asparagine 843.

It belongs to the JMY family.

Its subcellular location is the nucleus. It is found in the cytoplasmic vesicle. It localises to the cytoplasm. The protein localises to the cytoskeleton. The protein resides in the endomembrane system. Its subcellular location is the autophagosome membrane. Functionally, acts both as a nuclear p53/TP53-cofactor and a cytoplasmic regulator of actin dynamics depending on conditions. In nucleus, acts as a cofactor that increases p53/TP53 response. Increases p53/TP53-dependent transcription and apoptosis, suggesting an important role in p53/TP53 stress response such as DNA damage. In cytoplasm, acts as a nucleation-promoting factor for both branched and unbranched actin filaments. Activates the Arp2/3 complex to induce branched actin filament networks. Also catalyzes actin polymerization in the absence of Arp2/3, creating unbranched filaments. Contributes to cell motility by controlling actin dynamics. This is Junction-mediating and -regulatory protein (jmy) from Xenopus tropicalis (Western clawed frog).